A 511-amino-acid polypeptide reads, in one-letter code: Chromosomal replication initiator protein DnaA (511 aa).

The interval 1–90 (MSVELWQQCV…KRSSAPRAAP (90 aa)) is domain I, interacts with DnaA modulators. The segment at 91-174 (NAPLAAAASQ…QVEGALKHTS (84 aa)) is domain II. The tract at residues 133 to 162 (VAAHDEPSRDSFDPMAGASSQQAPARAEQR) is disordered. The segment covering 135–144 (AHDEPSRDSF) has biased composition (basic and acidic residues). A domain III, AAA+ region region spans residues 175 to 391 (YLNRTFTFEN…GALKRVIAHS (217 aa)). ATP contacts are provided by Gly219, Gly221, Lys222, and Thr223. Residues 392–511 (HFMGRDITIE…YKNLLRTLTT (120 aa)) form a domain IV, binds dsDNA region.

Belongs to the DnaA family. Oligomerizes as a right-handed, spiral filament on DNA at oriC.

It localises to the cytoplasm. Plays an essential role in the initiation and regulation of chromosomal replication. ATP-DnaA binds to the origin of replication (oriC) to initiate formation of the DNA replication initiation complex once per cell cycle. Binds the DnaA box (a 9 base pair repeat at the origin) and separates the double-stranded (ds)DNA. Forms a right-handed helical filament on oriC DNA; dsDNA binds to the exterior of the filament while single-stranded (ss)DNA is stabiized in the filament's interior. The ATP-DnaA-oriC complex binds and stabilizes one strand of the AT-rich DNA unwinding element (DUE), permitting loading of DNA polymerase. After initiation quickly degrades to an ADP-DnaA complex that is not apt for DNA replication. Binds acidic phospholipids. The sequence is that of Chromosomal replication initiator protein DnaA from Pseudomonas savastanoi pv. phaseolicola (strain 1448A / Race 6) (Pseudomonas syringae pv. phaseolicola (strain 1448A / Race 6)).